Reading from the N-terminus, the 244-residue chain is EEF1A lysine methyltransferase 2 (244 aa).

Positions 1-27 (MNADAEGHSGAVVPAQSPEGSSAADDF) are disordered. S21 bears the Phosphoserine mark.

It belongs to the class I-like SAM-binding methyltransferase superfamily. EFM4 family.

The protein resides in the cytoplasm. It is found in the nucleus. It carries out the reaction L-lysyl-[protein] + 3 S-adenosyl-L-methionine = N(6),N(6),N(6)-trimethyl-L-lysyl-[protein] + 3 S-adenosyl-L-homocysteine + 3 H(+). In terms of biological role, protein-lysine methyltransferase that selectively catalyzes the trimethylation of EEF1A at 'Lys-318'. The sequence is that of EEF1A lysine methyltransferase 2 from Mus musculus (Mouse).